We begin with the raw amino-acid sequence, 2475 residues long: Polyprotein pp220 (2475 aa).

Gly-2 is lipidated: N-myristoyl glycine; by host. A coiled-coil region spans residues 2184–2211 (RNQIIGELNAFRTQLEDTRREVNNLIQT).

Belongs to the asfivirus polyprotein pp220 family. In terms of processing, specific enzymatic cleavages in vivo by the viral pS273R protease yield mature proteins.

The protein localises to the host cytoplasm. The protein resides in the host perinuclear region. It is found in the virion. Its subcellular location is the host nucleus. Functionally, essential for the core assembly. Its myristoyl moiety may function as a membrane-anchoring signal to bind the developing core shell to the inner viral envelope. The structural protein p34 is a component of the virus core shell. Its function is as follows. The structural protein p14 is a component of the virus core shell. In terms of biological role, the structural protein p37 is a component of the virus core shell. Functionally, the structural protein p150 is a component of the virus core shell. The protein is Polyprotein pp220 of African swine fever virus (isolate Tick/South Africa/Pretoriuskop Pr4/1996) (ASFV).